The primary structure comprises 279 residues: Ankyrin repeat domain-containing protein 7 (279 aa).

The span at 1-11 shows a compositional bias: basic residues; it reads MKKFFPFRGKR. The tract at residues 1-25 is disordered; it reads MKKFFPFRGKRKTDDSHSHSSEVPI. 5 ANK repeats span residues 80-109, 113-142, 146-175, 179-208, and 212-241; these read RSRT…KINV, ENRT…DPNL, YSNT…NLEA, DGHT…DVNA, and NHRT…DLAH.

The polypeptide is Ankyrin repeat domain-containing protein 7 (Ankrd7) (Mus musculus (Mouse)).